Consider the following 669-residue polypeptide: Elongation factor G 2 (669 aa).

Residues 1–276 (MSIRNIGIMA…SIVDYLPSPF (276 aa)) form the tr-type G domain. Residues 10 to 17 (AHIDAGKT), 74 to 78 (DTPGH), and 128 to 131 (NKMD) contribute to the GTP site.

This sequence belongs to the TRAFAC class translation factor GTPase superfamily. Classic translation factor GTPase family. EF-G/EF-2 subfamily.

It localises to the cytoplasm. In terms of biological role, catalyzes the GTP-dependent ribosomal translocation step during translation elongation. During this step, the ribosome changes from the pre-translocational (PRE) to the post-translocational (POST) state as the newly formed A-site-bound peptidyl-tRNA and P-site-bound deacylated tRNA move to the P and E sites, respectively. Catalyzes the coordinated movement of the two tRNA molecules, the mRNA and conformational changes in the ribosome. The protein is Elongation factor G 2 (fusB) of Borreliella burgdorferi (strain ATCC 35210 / DSM 4680 / CIP 102532 / B31) (Borrelia burgdorferi).